Consider the following 283-residue polypeptide: Glutamate racemase (283 aa).

Substrate-binding positions include 28–29 and 60–61; these read DS and YG. Cysteine 92 (proton donor/acceptor) is an active-site residue. 93–94 is a binding site for substrate; sequence NT. The Proton donor/acceptor role is filled by cysteine 204. Residue 205–206 participates in substrate binding; that stretch reads TH.

The protein belongs to the aspartate/glutamate racemases family.

It catalyses the reaction L-glutamate = D-glutamate. Its pathway is cell wall biogenesis; peptidoglycan biosynthesis. Provides the (R)-glutamate required for cell wall biosynthesis. This chain is Glutamate racemase, found in Salmonella gallinarum (strain 287/91 / NCTC 13346).